Here is an 876-residue protein sequence, read N- to C-terminus: MELITILEKTVSPDRLELEAAQKFLERAAVENLPTFLVELSRVLANPGNSQVARVAAGLQIKNSLTSKDPDIKAQYQQRWLAIDANARREVKNYVLQTLGTETYRPSSASQCVAGIACAEIPVSQWPELIPQLVANVTNPNSTEHMKESTLEAIGYICQDIDPEQLQDKSNEILTAIIQGMRKEEPSNNVKLAATNALLNSLEFTKANFDKESERHFIMQVVCEATQCPDTRVRVAALQNLVKIMSLYYQYMETYMGPALFAITIEAMKSDIDEVALQGIEFWSNVCDEEMDLAIEASEAAEQGRPPEHTSKFYAKGALQYLVPILTQTLTKQDENDDDDDWNPCKAAGVCLMLLSTCCEDDIVPHVLPFIKEHIKNPDWRYRDAAVMAFGSILEGPEPNQLKPLVIQAMPTLIELMKDPSVVVRDTTAWTVGRICELLPEAAINDVYLAPLLQCLIEGLSAEPRVASNVCWAFSSLAEAAYEAADVADDQEEPATYCLSSSFELIVQKLLETTDRPDGHQNNLRSSAYESLMEIVKNSAKDCYPAVQKTTLVIMERLQQVLQMESHIQSTSDRIQFNDLQSLLCATLQNVLRKVQHQDALQISDVVMASLLRMFQSTAGSGGVQEDALMAVSTLVEVLGGEFLKYMEAFKPFLGIGLKNYAEYQVCLAAVGLVGDLCRALQSNILPFCDEVMQLLLENLGNENVHRSVKPQILSVFGDIALAIGGEFKKYLEVVLNTLQQASQAQVDKSDFDMVDYLNELRESCLEAYTGIVQGLKGDQENVHPDVMLVQPRVEFILSFIDHIAGDEDHTDGVVACAAGLIGDLCTAFGKDVLKLVEARPMIHELLTEGRRSKTNKAKTLATWATKELRKLKNQA.

At Met1 the chain carries N-acetylmethionine. HEAT repeat units follow at residues 3–29 (LITI…ERAA), 32–62 (NLPT…LQIK), 85–120 (ANAR…ACAE), 129–160 (LIPQ…ICQD), and 170–201 (SNEI…LLNS). Phosphoserine is present on Ser12. In terms of domain architecture, Importin N-terminal spans 21 to 101 (AQKFLERAAV…KNYVLQTLGT (81 aa)). Residue Lys211 is modified to N6-acetyllysine. HEAT repeat units lie at residues 212–247 (ESER…IMSL), 260–302 (LFAI…EAAE), 314–359 (YAKG…STCC), 363–392 (IVPH…AFGS), 399–438 (PNQL…ICEL), 449–485 (LAPL…YEAA), 500–537 (SSSF…EIVK), 544–592 (YPAV…QNVL), 597–639 (HQDA…VEVL), 644–680 (LKYM…LCRA), 686–724 (LPFC…ALAI), 729–777 (KKYL…QGLK), 785–828 (PDVM…LCTA), and 834–875 (LKLV…LKNQ). The interval 286–462 (VCDEEMDLAI…LQCLIEGLSA (177 aa)) is essential for high affinity interaction with RPL23A. The interval 329–342 (TLTKQDENDDDDDW) is IAB-binding. The tract at residues 334–419 (DENDDDDDWN…MPTLIELMKD (86 aa)) is ran-GTP binding. Residues Lys835 and Lys867 each carry the N6-acetyllysine modification.

The protein belongs to the importin beta family. Importin beta-1 subfamily. As to quaternary structure, forms a complex with an importin alpha subunit. Interacts with XPO1. Forms a heterodimer with IPO7. The KPNB1/IPO7 heterodimer interacts with H1 histone. Interacts with SNUPN. Interacts with H2A, H2B, H3 and H4 histones. Component of an import snRNP complex composed of KPNB1, SNUPN, SMN1 and ZNF259. Component of a nuclear export receptor complex composed of KPNB1, Ran, SNUPN and XPO1. Interacts with SRY. Interacts with PRKCI/atypical protein kinase C iota. Interacts with KPNA2. Interacts with KPNA7. Interacts with SNAI1 (via zinc fingers) and SNAI2 (via zinc fingers). Interacts with SLC35G1 and STIM1. Interacts with DCAF8. Interacts with RAN. Interacts with NUMA1 (via C-terminus); this interaction is inhibited by RanGTP. Interacts with ZBED1/hDREF; required for nuclear import of ZBED1/hDREF. Interacts with SRP19. Interacts with RPL23A (via BIB domain), RPS7 and RPL5. Post-translationally, mono-ADP-ribosylated by PARP16.

The protein resides in the cytoplasm. It is found in the nucleus envelope. Functions in nuclear protein import, either in association with an adapter protein, like an importin-alpha subunit, which binds to nuclear localization signals (NLS) in cargo substrates, or by acting as autonomous nuclear transport receptor. Acting autonomously, serves itself as NLS receptor. Docking of the importin/substrate complex to the nuclear pore complex (NPC) is mediated by KPNB1 through binding to nucleoporin FxFG repeats and the complex is subsequently translocated through the pore by an energy requiring, Ran-dependent mechanism. At the nucleoplasmic side of the NPC, Ran binds to importin-beta and the three components separate and importin-alpha and -beta are re-exported from the nucleus to the cytoplasm where GTP hydrolysis releases Ran from importin. The directionality of nuclear import is thought to be conferred by an asymmetric distribution of the GTP- and GDP-bound forms of Ran between the cytoplasm and nucleus. Mediates autonomously the nuclear import of ribosomal proteins RPL23A, RPS7 and RPL5. In association with IPO7, mediates the nuclear import of H1 histone. In vitro, mediates nuclear import of H2A, H2B, H3 and H4 histones. Imports MRTFA, SNAI1 and PRKCI into the nucleus. This Mus musculus (Mouse) protein is Importin subunit beta-1 (Kpnb1).